Here is a 156-residue protein sequence, read N- to C-terminus: Small ribosomal subunit protein uS7 (156 aa).

This sequence belongs to the universal ribosomal protein uS7 family. In terms of assembly, part of the 30S ribosomal subunit. Contacts proteins S9 and S11.

One of the primary rRNA binding proteins, it binds directly to 16S rRNA where it nucleates assembly of the head domain of the 30S subunit. Is located at the subunit interface close to the decoding center, probably blocks exit of the E-site tRNA. The chain is Small ribosomal subunit protein uS7 from Metamycoplasma arthritidis (strain 158L3-1) (Mycoplasma arthritidis).